A 59-amino-acid polypeptide reads, in one-letter code: Protein translocase subunit SecE (59 aa).

A helical transmembrane segment spans residues 30 to 50 (ITVISTVIFFVIFFALLDTGI).

It belongs to the SecE/SEC61-gamma family. In terms of assembly, component of the Sec protein translocase complex. Heterotrimer consisting of SecY, SecE and SecG subunits. The heterotrimers can form oligomers, although 1 heterotrimer is thought to be able to translocate proteins. Interacts with the ribosome. Interacts with SecDF, and other proteins may be involved. Interacts with SecA.

It localises to the cell membrane. Essential subunit of the Sec protein translocation channel SecYEG. Clamps together the 2 halves of SecY. May contact the channel plug during translocation. This chain is Protein translocase subunit SecE, found in Bacillus subtilis (strain 168).